Reading from the N-terminus, the 791-residue chain is ABC multidrug transporter mdr2 (791 aa).

Asparagine 147 carries N-linked (GlcNAc...) asparagine glycosylation. The next 2 helical transmembrane spans lie at 182-202 (ALAFLFLLVSSGITMSIPFSI) and 220-240 (LFGLSLPMFYGALAGILTLGA). In terms of domain architecture, ABC transmembrane type-1 spans 182-471 (ALAFLFLLVS…LSSFYSELMK (290 aa)). Asparagine 303 carries an N-linked (GlcNAc...) asparagine glycan. Helical transmembrane passes span 307 to 324 (GLRAAVSGAAGFGLMAYV) and 326 to 346 (LKLSSILALLLPPIGLGAFFY). 2 N-linked (GlcNAc...) asparagine glycosylation sites follow: asparagine 352 and asparagine 421. 2 helical membrane passes run 422–442 (MTILALLYVGGGMVQSGAITI) and 445–465 (LTSFLMYTAYAGSSMFGLSSF). One can recognise an ABC transporter domain in the interval 504–741 (IRFENVTFSY…PDGAFTKLME (238 aa)). The N-linked (GlcNAc...) asparagine glycan is linked to asparagine 508. An ATP-binding site is contributed by 539–546 (GPSGGGKS). The N-linked (GlcNAc...) asparagine glycan is linked to asparagine 692. Polar residues predominate over residues 754 to 769 (ANTPANPVAQETSWDL). A disordered region spans residues 754-791 (ANTPANPVAQETSWDLQSDDGTEISEDTNIPSEPRTID). Residues 770–779 (QSDDGTEISE) show a composition bias toward acidic residues.

It belongs to the ABC transporter superfamily. ABCB family. Mitochondrial peptide exporter (TC 3.A.1.212) subfamily.

Its subcellular location is the cell membrane. Functionally, pleiotropic ABC efflux transporter that may be involved in A.fumigatus adaptation to azoles. The polypeptide is ABC multidrug transporter mdr2 (Aspergillus fumigatus (strain ATCC MYA-4609 / CBS 101355 / FGSC A1100 / Af293) (Neosartorya fumigata)).